The chain runs to 986 residues: MRVNEKYSTLPAEDRSVHIINICAIEDIGYLPSEGTLLNSLSVDPDAECKYGLYFRDGRRKVDYILVYHHKRPSGNRTLVRRVQHSDTPSGARSVKQDHPLPGKGASLDAGSGEPPMDYHEDDKRFRREEYEGNLLEAGLELERDEDTKIHGVGFVKIHAPWNVLCREAEFLKLKMPTKKMYHINETRGLLKKINSVLQKITDPIQPKVAEHRPQTMKRLSYPFSREKQHLFDLSDKDSFFDSKTRSTIVYEILKRTTCTKAKYSMGITSLLANGVYAAAYPLHDGDYNGENVEFNDRKLLYEEWARYGVFYKYQPIDLVRKYFGEKIGLYFAWLGVYTQMLIPASIVGIIVFLYGCATMDENIPSMEMCDQRHNITMCPLCDKTCSYWKMSSACATARASHLFDNPATVFFSVFMALWAATFMEHWKRKQMRLNYRWDLTGFEEEEEAVKDHPRAEYEARVLEKSLKKESRNKEKRRHIPEESTNKWKQRVKTAMAGVKLTDKVKLTWRDRFPAYLTNLVSIIFMIAVTFAIVLGVIIYRISMAAALAMNSSPSVRSNIRVTVTATAVIINLVVIILLDEVYGCIARWLTKIEVPKTEKSFEERLIFKAFLLKFVNSYTPIFYVAFFKGRFVGRPGDYVYIFRSFRMEECAPGGCLMELCIQLSIIMLGKQLIQNNLFEIGIPKMKKLIRYLKLKQQSPPDHEECVKRKQRYEVDYNLEPFAGLTPEYMEMIIQFGFVTLFVASFPLAPLFALLNNIIEIRLDAKKFVTELRRPVAVRAKDIGIWYNILRGIGKLAVIINAFVISFTSDFIPRLVYLYMYSKNGTMHGFVNHTLSSFNVSDFQNGTAPNDPLDLGYEVQICRYKDYREPPWSENKYDISKDFWAVLAARLAFVIVFQNLVMFMSDFVDWVIPDIPKDISQQIHKEKVLMVELFMREEQDKQQLLETWMEKERQKDEPPCNHHNTKACPDSLGSPAPSHAYHGGVL.

At 1-333 the chain is on the cytoplasmic side; sequence MRVNEKYSTL…FGEKIGLYFA (333 aa). The interval 79-121 is disordered; the sequence is LVRRVQHSDTPSGARSVKQDHPLPGKGASLDAGSGEPPMDYHE. S107 and S196 each carry phosphoserine. The helical transmembrane segment at 334-354 threads the bilayer; that stretch reads WLGVYTQMLIPASIVGIIVFL. Over 355-406 the chain is Extracellular; sequence YGCATMDENIPSMEMCDQRHNITMCPLCDKTCSYWKMSSACATARASHLFDN. Disulfide bonds link C370-C395, C379-C862, C382-C386, and C651-C656. The chain crosses the membrane as a helical span at residues 407-427; the sequence is PATVFFSVFMALWAATFMEHW. E425 is a Ca(2+) binding site. Residues 428 to 519 are Cytoplasmic-facing; the sequence is KRKQMRLNYR…RDRFPAYLTN (92 aa). The helical transmembrane segment at 520-540 threads the bilayer; that stretch reads LVSIIFMIAVTFAIVLGVIIY. Residues 541 to 568 are Extracellular-facing; that stretch reads RISMAAALAMNSSPSVRSNIRVTVTATA. A helical membrane pass occupies residues 569 to 589; the sequence is VIINLVVIILLDEVYGCIARW. Over 590-607 the chain is Cytoplasmic; the sequence is LTKIEVPKTEKSFEERLI. A helical membrane pass occupies residues 608-628; sequence FKAFLLKFVNSYTPIFYVAFF. The Extracellular portion of the chain corresponds to 629 to 657; it reads KGRFVGRPGDYVYIFRSFRMEECAPGGCL. A helical transmembrane segment spans residues 658-678; it reads MELCIQLSIIMLGKQLIQNNL. N677, E680, E728, E731, E760, and D764 together coordinate Ca(2+). Over 679–725 the chain is Cytoplasmic; the sequence is FEIGIPKMKKLIRYLKLKQQSPPDHEECVKRKQRYEVDYNLEPFAGL. The next 2 helical transmembrane spans lie at 726 to 746 and 747 to 767; these read TPEY…VASF and PLAP…DAKK. The Cytoplasmic segment spans residues 768–784; it reads FVTELRRPVAVRAKDIG. Residues 785–805 form a helical membrane-spanning segment; that stretch reads IWYNILRGIGKLAVIINAFVI. The Extracellular segment spans residues 806-892; that stretch reads SFTSDFIPRL…FWAVLAARLA (87 aa). An N-linked (GlcNAc...) asparagine glycan is attached at N832. A helical membrane pass occupies residues 893–913; the sequence is FVIVFQNLVMFMSDFVDWVIP. Ca(2+)-binding residues include D909 and D914. The Cytoplasmic segment spans residues 914 to 986; that stretch reads DIPKDISQQI…PSHAYHGGVL (73 aa). Positions 951–960 are enriched in basic and acidic residues; sequence KERQKDEPPC. The segment at 951–986 is disordered; sequence KERQKDEPPCNHHNTKACPDSLGSPAPSHAYHGGVL.

The protein belongs to the anoctamin family. As to quaternary structure, homodimer. Interacts with CFTR. Interacts with TRPV4. Expressed in nasal epithelial cells (at protein level). In the kidney, expressed in the collecting duct (at protein level). Broadly expressed with higher levels in liver, skeletal muscle and gastrointestinal muscles. Expressed in eccrine sweat glands.

It localises to the apical cell membrane. The protein resides in the presynapse. It carries out the reaction chloride(in) = chloride(out). With respect to regulation, ATP and calmodulin are essential for its activation. Channel activity is inhibited by CFTR protein and by chloride inhibitors such as niflumic acid (NFA) and 4,4'-diisothiocyanatostilbene-2,2'-disulfonic acid (DIDS). Activated by heat with activation seen at temperatures above 44 degrees Celsius. Activated by BDNF in radial glial cells. Its function is as follows. Calcium-activated chloride channel (CaCC). Plays a role in transepithelial anion transport and smooth muscle contraction. Required for the normal functioning of the interstitial cells of Cajal (ICCs) which generate electrical pacemaker activity in gastrointestinal smooth muscles. Acts as a major contributor to basal and stimulated chloride conductance in airway epithelial cells and plays an important role in tracheal cartilage development. Required for CFTR activation by enhancing endoplasmic reticulum Ca(2+) store release and is also required for CFTR membrane expression. Required for basal and ATP-dependent mucus secretion in airways and intestine, probably by controlling exocytosis of mucus-filled granules by providing Ca(2+) to an apical signaling compartment. Contributes to airway mucus expression induced by interleukins IL3 and IL8 and by the asthma-associated protein CLCA1 and is required for expression of mucin MUC5AC. However, was shown in another study not to be required for MUC5AC expression. Plays a role in the propagation of Ca(2+) waves in Kolliker's organ in the cochlea and contributes to the refinement of auditory brainstem circuitries prior to hearing onset. In vomeronasal sensory neurons, modulates spontaneous firing patterns in the absence of stimuli as well as the firing pattern of pheromone-evoked activity. Responsible for calcium-activated chloride channel activity in type I taste cells of the vallate papillae. Acts as a heat sensor in nociceptive neurons. In dorsal root ganglion neurons, plays a role in mediating non-histaminergic Mas-related G-protein coupled receptor (MRGPR)-dependent itching, acting as a downstream effector of MRGPRs. In the developing brain, required for the Ca(2+)-dependent process extension of radial glial cells. Calcium-activated chloride channel (CaCC). Contributes to calcium-activated chloride secretion in human sweat gland epithelial cells. Shows increased basal chloride permeability and decreased Ca(2+)-induced chloride permeability. Functionally, calcium-activated chloride channel (CaCC). Shows increased sensitivity to intracellular Ca(2+). The protein is Anoctamin-1 (ANO1) of Homo sapiens (Human).